The sequence spans 190 residues: Probable chemoreceptor glutamine deamidase CheD (190 aa).

This sequence belongs to the CheD family.

It carries out the reaction L-glutaminyl-[protein] + H2O = L-glutamyl-[protein] + NH4(+). Its function is as follows. Probably deamidates glutamine residues to glutamate on methyl-accepting chemotaxis receptors (MCPs), playing an important role in chemotaxis. The polypeptide is Probable chemoreceptor glutamine deamidase CheD (Acidiphilium cryptum (strain JF-5)).